We begin with the raw amino-acid sequence, 400 residues long: Probable peptidoglycan glycosyltransferase FtsW (400 aa).

11 helical membrane-spanning segments follow: residues 30 to 50 (LSVL…SIGI), 65 to 84 (QAAY…RIRL), 92 to 112 (GLLL…GVGV), 123 to 143 (LGLF…LYLA), 157 to 177 (FAGF…LLME), 179 to 199 (DFGA…LAGA), 201 to 221 (LWQF…LAIT), 247 to 267 (TQSL…GASV), 280 to 300 (FLFA…VVLL), 321 to 341 (LFGA…AFIN), and 356 to 376 (LPLM…VGLL).

The protein belongs to the SEDS family. FtsW subfamily.

It is found in the cell inner membrane. The enzyme catalyses [GlcNAc-(1-&gt;4)-Mur2Ac(oyl-L-Ala-gamma-D-Glu-L-Lys-D-Ala-D-Ala)](n)-di-trans,octa-cis-undecaprenyl diphosphate + beta-D-GlcNAc-(1-&gt;4)-Mur2Ac(oyl-L-Ala-gamma-D-Glu-L-Lys-D-Ala-D-Ala)-di-trans,octa-cis-undecaprenyl diphosphate = [GlcNAc-(1-&gt;4)-Mur2Ac(oyl-L-Ala-gamma-D-Glu-L-Lys-D-Ala-D-Ala)](n+1)-di-trans,octa-cis-undecaprenyl diphosphate + di-trans,octa-cis-undecaprenyl diphosphate + H(+). The protein operates within cell wall biogenesis; peptidoglycan biosynthesis. Its function is as follows. Peptidoglycan polymerase that is essential for cell division. The sequence is that of Probable peptidoglycan glycosyltransferase FtsW from Thioalkalivibrio sulfidiphilus (strain HL-EbGR7).